A 2200-amino-acid polypeptide reads, in one-letter code: Bromodomain and WD repeat-containing DDB_G0285837 (2200 aa).

Disordered stretches follow at residues 137-178 (GFND…SNTN), 194-245 (VTPT…TTPP), and 259-288 (DIQQ…NNNN). Composition is skewed to low complexity over residues 161 to 176 (NNNN…SNSN), 203 to 242 (NTTN…TTLT), and 259 to 273 (DIQQ…QQQQ). WD repeat units follow at residues 352-391 (GHKA…LIAT), 394-433 (GHLG…YDSI), 442-483 (SVNN…HVIS), 548-586 (GKTN…PKLV), 591-630 (GHPT…KWDH), 653-691 (RSKA…FHLE), 694-736 (EHTS…KKFV), and 741-780 (GFQC…DINN). Acidic residues-rich tracts occupy residues 918-933 (DDEI…EDFN) and 955-968 (QDDD…EDYD). 4 disordered regions span residues 918 to 1180 (DDEI…NHLT), 1262 to 1297 (NNNN…DDDD), 1461 to 1538 (ENNQ…NNNN), and 1662 to 1703 (NFNS…NNNN). Residues 974 to 1000 (MSTRKKSKIKADKRKKRLLKQSKKFTR) are compositionally biased toward basic residues. Over residues 1052-1074 (GEIEMDDDDQYLNDNILDSDDND) the composition is skewed to acidic residues. Residues 1109–1132 (SSDNSSENDSSANGSDSDYSGSKS) are compositionally biased toward low complexity. A compositionally biased stretch (basic residues) spans 1133 to 1164 (NKNKRGDKSKRNKKGKKNVKNKKVQKRGRKKS). Low complexity-rich tracts occupy residues 1262-1292 (NNNN…QQIN) and 1461-1525 (ENNQ…NSLN). The 102-residue stretch at 1722 to 1823 (EKIENLKKEM…HRISDILKEA (102 aa)) folds into the Bromo domain. Residues 1850–2200 (DKDDSQLDDE…RGRGRPPKSN (351 aa)) are disordered. The span at 1878–1888 (LANNNHGNNKS) shows a compositional bias: low complexity. Positions 1910–1920 (TGKNITRSLLS) are enriched in polar residues. The segment covering 1945–1958 (TTTTTTTTTTTSST) has biased composition (low complexity). Acidic residues-rich tracts occupy residues 2016 to 2028 (DYND…DNDG), 2057 to 2073 (EDED…EEDY), and 2104 to 2113 (SEEEEDEDQS). The span at 2114-2124 (DVNSNNNSDNE) shows a compositional bias: low complexity. Acidic residues predominate over residues 2125–2138 (SGGEDGYSGEDGSE). Over residues 2170-2185 (SFKNNNNNNNINNNVN) the composition is skewed to low complexity. Residues 2190-2200 (KRGRGRPPKSN) are compositionally biased toward basic residues.

This is Bromodomain and WD repeat-containing DDB_G0285837 from Dictyostelium discoideum (Social amoeba).